The sequence spans 448 residues: Probable glycine dehydrogenase (decarboxylating) subunit 1 (448 aa).

The protein belongs to the GcvP family. N-terminal subunit subfamily. As to quaternary structure, the glycine cleavage system is composed of four proteins: P, T, L and H. In this organism, the P 'protein' is a heterodimer of two subunits.

It catalyses the reaction N(6)-[(R)-lipoyl]-L-lysyl-[glycine-cleavage complex H protein] + glycine + H(+) = N(6)-[(R)-S(8)-aminomethyldihydrolipoyl]-L-lysyl-[glycine-cleavage complex H protein] + CO2. The glycine cleavage system catalyzes the degradation of glycine. The P protein binds the alpha-amino group of glycine through its pyridoxal phosphate cofactor; CO(2) is released and the remaining methylamine moiety is then transferred to the lipoamide cofactor of the H protein. The sequence is that of Probable glycine dehydrogenase (decarboxylating) subunit 1 from Shouchella clausii (strain KSM-K16) (Alkalihalobacillus clausii).